We begin with the raw amino-acid sequence, 154 residues long: 6,7-dimethyl-8-ribityllumazine synthase (154 aa).

5-amino-6-(D-ribitylamino)uracil is bound by residues phenylalanine 22, 56–58 (SFE), and 80–82 (AVI). 85–86 (ST) contributes to the (2S)-2-hydroxy-3-oxobutyl phosphate binding site. Histidine 88 (proton donor) is an active-site residue. A 5-amino-6-(D-ribitylamino)uracil-binding site is contributed by tyrosine 113. Position 127 (arginine 127) interacts with (2S)-2-hydroxy-3-oxobutyl phosphate.

The protein belongs to the DMRL synthase family. In terms of assembly, forms an icosahedral capsid composed of 60 subunits, arranged as a dodecamer of pentamers.

The catalysed reaction is (2S)-2-hydroxy-3-oxobutyl phosphate + 5-amino-6-(D-ribitylamino)uracil = 6,7-dimethyl-8-(1-D-ribityl)lumazine + phosphate + 2 H2O + H(+). Its pathway is cofactor biosynthesis; riboflavin biosynthesis; riboflavin from 2-hydroxy-3-oxobutyl phosphate and 5-amino-6-(D-ribitylamino)uracil: step 1/2. In terms of biological role, catalyzes the formation of 6,7-dimethyl-8-ribityllumazine by condensation of 5-amino-6-(D-ribitylamino)uracil with 3,4-dihydroxy-2-butanone 4-phosphate. This is the penultimate step in the biosynthesis of riboflavin. This is 6,7-dimethyl-8-ribityllumazine synthase from Sulfurihydrogenibium sp. (strain YO3AOP1).